A 650-amino-acid chain; its full sequence is Acetyl-coenzyme A synthetase (650 aa).

CoA contacts are provided by residues 191–194 (RGGR), T311, and N335. Residues 387 to 389 (GEP), 411 to 416 (DTWWQT), D500, and R515 contribute to the ATP site. S523 contacts CoA. An ATP-binding site is contributed by R526. Positions 537, 539, and 542 each coordinate Mg(2+). R584 serves as a coordination point for CoA. K609 bears the N6-acetyllysine mark.

The protein belongs to the ATP-dependent AMP-binding enzyme family. The cofactor is Mg(2+). Acetylated. Deacetylation by the SIR2-homolog deacetylase activates the enzyme.

The enzyme catalyses acetate + ATP + CoA = acetyl-CoA + AMP + diphosphate. Its function is as follows. Catalyzes the conversion of acetate into acetyl-CoA (AcCoA), an essential intermediate at the junction of anabolic and catabolic pathways. AcsA undergoes a two-step reaction. In the first half reaction, AcsA combines acetate with ATP to form acetyl-adenylate (AcAMP) intermediate. In the second half reaction, it can then transfer the acetyl group from AcAMP to the sulfhydryl group of CoA, forming the product AcCoA. This is Acetyl-coenzyme A synthetase from Shewanella amazonensis (strain ATCC BAA-1098 / SB2B).